A 1773-amino-acid chain; its full sequence is Mucin-22 (1773 aa).

Residues 1–26 (MRRGNISPAFWFLWLLLFGLLGPSSE) form the signal peptide. The Extracellular portion of the chain corresponds to 27–1660 (NTTAFTKGSD…VIKPSGYLQP (1634 aa)). Disordered regions lie at residues 61–102 (TGSK…TDSG), 176–357 (TMAS…SETT), 372–405 (MGSETTTNSTTSSETTVTSTAGSETTTVSTVGSE), 434–572 (SETI…STAS), 590–674 (TVGS…EGSE), 754–1026 (DTTT…ETTM), 1064–1485 (TTIA…GSET), and 1603–1639 (MGASSTTSAHGVRTTTGSTREPTSSTFQETGPVSMGT). The interval 153-1514 (MASSTTSTAG…PTATSLTGSE (1362 aa)) is 124 X 10 AA approximate repeats. Positions 178–243 (ASTTGSETAT…GSEATTTSTA (66 aa)) are enriched in low complexity. The span at 248 to 258 (ITASSMSSETT) shows a compositional bias: polar residues. Residues 262–357 (AAGSNTTTAS…TVSTAGSETT (96 aa)) show a composition bias toward low complexity. Low complexity-rich tracts occupy residues 440–481 (STAG…AAST) and 490–546 (STAG…SEPT). Residues 547-572 (MASTMGSETTMASTIGPETTKVSTAS) show a composition bias toward polar residues. Composition is skewed to low complexity over residues 755 to 1025 (TTTA…SETT) and 1064 to 1465 (TTIA…GSET). Composition is skewed to polar residues over residues 1466–1485 (NTACTTGSETSTPSSAGSET) and 1615–1639 (RTTTGSTREPTSSTFQETGPVSMGT). The chain crosses the membrane as a helical span at residues 1661-1681 (WAIILISLAAVVAAVGLSVGL). Residues 1682–1773 (SFCLRNLFFP…GGHYGHGGGH (92 aa)) lie on the Cytoplasmic side of the membrane.

As to expression, expressed in lung by serous cells of the submucosal gland (at protein level). Detected in the placenta, lung and testis.

It is found in the membrane. In Homo sapiens (Human), this protein is Mucin-22 (MUC22).